Reading from the N-terminus, the 139-residue chain is D-ribose pyranase (139 aa).

Residue His-20 is the Proton donor of the active site. Substrate is bound by residues Asp-28, His-106, and 128–130 (YAN).

The protein belongs to the RbsD / FucU family. RbsD subfamily. As to quaternary structure, homodecamer.

The protein resides in the cytoplasm. It carries out the reaction beta-D-ribopyranose = beta-D-ribofuranose. It functions in the pathway carbohydrate metabolism; D-ribose degradation; D-ribose 5-phosphate from beta-D-ribopyranose: step 1/2. Functionally, catalyzes the interconversion of beta-pyran and beta-furan forms of D-ribose. This Escherichia coli O45:K1 (strain S88 / ExPEC) protein is D-ribose pyranase.